The chain runs to 156 residues: Small ribosomal subunit protein uS11 (156 aa).

Residues 1–27 (MSEKEQKEVEAKESSGKAEERRETREK) are disordered.

Belongs to the universal ribosomal protein uS11 family. As to quaternary structure, part of the 30S ribosomal subunit.

Located on the platform of the 30S subunit. The sequence is that of Small ribosomal subunit protein uS11 from Thermofilum pendens (strain DSM 2475 / Hrk 5).